The primary structure comprises 348 residues: Alpha-2-HS-glycoprotein (348 aa).

An N-terminal signal peptide occupies residues 1–18 (MKTLVLLLCFTLLWGCQS). The 115-residue stretch at 19–133 (APQGTGLGFR…QFSVMHTKCH (115 aa)) folds into the Cystatin fetuin-A-type 1 domain. Disulfide bonds link Cys-32–Cys-339, Cys-89–Cys-100, Cys-114–Cys-132, Cys-146–Cys-149, Cys-208–Cys-219, and Cys-230–Cys-247. An N-linked (GlcNAc...) asparagine glycan is attached at Asn-99. 2 positions are modified to phosphoserine: Ser-134 and Ser-138. Residues 144 to 255 (KVCPHCALLT…TCTAFPTQAN (112 aa)) enclose the Cystatin fetuin-A-type 2 domain. N-linked (GlcNAc...) asparagine glycans are attached at residues Asn-156 and Asn-176. Phosphoserine occurs at positions 307, 311, 314, and 316.

The protein belongs to the fetuin family. In terms of processing, phosphorylated by FAM20C in the extracellular medium. As to expression, expressed by the liver and secreted in plasma.

The protein localises to the secreted. The sequence is that of Alpha-2-HS-glycoprotein (AHSG) from Meriones unguiculatus (Mongolian jird).